The primary structure comprises 577 residues: Phosphoenolpyruvate-protein phosphotransferase (577 aa).

The active-site Tele-phosphohistidine intermediate is the His-191. 2 residues coordinate phosphoenolpyruvate: Arg-298 and Arg-334. Residues Glu-435 and Asp-459 each coordinate Mg(2+). Phosphoenolpyruvate-binding positions include 458–459 (ND) and Arg-469. Residue Cys-506 is the Proton donor of the active site.

Belongs to the PEP-utilizing enzyme family. Homodimer. It depends on Mg(2+) as a cofactor.

The protein localises to the cytoplasm. The catalysed reaction is L-histidyl-[protein] + phosphoenolpyruvate = N(pros)-phospho-L-histidyl-[protein] + pyruvate. General (non sugar-specific) component of the phosphoenolpyruvate-dependent sugar phosphotransferase system (sugar PTS). This major carbohydrate active-transport system catalyzes the phosphorylation of incoming sugar substrates concomitantly with their translocation across the cell membrane. Enzyme I transfers the phosphoryl group from phosphoenolpyruvate (PEP) to the phosphoryl carrier protein (HPr). The polypeptide is Phosphoenolpyruvate-protein phosphotransferase (ptsI) (Streptococcus equinus (Streptococcus bovis)).